Consider the following 429-residue polypeptide: METTQTSTIASKDSRSAWRKTDTMWMLGLYGTAIGAGVLFLPINAGVGGMIPLIIMAILAFPMTFFAHRGLTRFVLSGKNPGEDITEVVEEHFGIGAGKLITLLYFFAIYPILLVYSVAITNTVESFMSHQLGMTPPPRAILSLILIVGMMTIVRFGEQMIVKAMSILVFPFVGVLMLLALYLIPQWNGAALETLSLDTASATGNGLWMTLWLAIPVMVFSFNHSPIISSFAVAKREEYGDMAEQKCSKILAFAHIMMVLTVMFFVFSCVLSLTPADLAAAKEQNISILSYLANHFNAPVIAWMAPIIAIIAITKSFLGHYLGAREGFNGMVIKSLRGKGKSIEINKLNRITALFMLVTTWIVATLNPSILGMIETLGGPIIAMILFLMPMYAIQKVPAMRKYSGHISNVFVVVMGLIAISAIFYSLFS.

At 1 to 22 (METTQTSTIASKDSRSAWRKTD) the chain is on the cytoplasmic side. The helical transmembrane segment at 23-43 (TMWMLGLYGTAIGAGVLFLPI) threads the bilayer. Residues 44–46 (NAG) lie on the Periplasmic side of the membrane. A helical transmembrane segment spans residues 47 to 67 (VGGMIPLIIMAILAFPMTFFA). The Cytoplasmic portion of the chain corresponds to 68-99 (HRGLTRFVLSGKNPGEDITEVVEEHFGIGAGK). Residues 100–120 (LITLLYFFAIYPILLVYSVAI) traverse the membrane as a helical segment. Over 121-140 (TNTVESFMSHQLGMTPPPRA) the chain is Periplasmic. The helical transmembrane segment at 141–161 (ILSLILIVGMMTIVRFGEQMI) threads the bilayer. Residues 162–163 (VK) lie on the Cytoplasmic side of the membrane. Residues 164 to 184 (AMSILVFPFVGVLMLLALYLI) form a helical membrane-spanning segment. Residues 185–201 (PQWNGAALETLSLDTAS) lie on the Periplasmic side of the membrane. Residues 202-222 (ATGNGLWMTLWLAIPVMVFSF) form a helical membrane-spanning segment. Over 223–249 (NHSPIISSFAVAKREEYGDMAEQKCSK) the chain is Cytoplasmic. A helical membrane pass occupies residues 250–270 (ILAFAHIMMVLTVMFFVFSCV). Residues 271–297 (LSLTPADLAAAKEQNISILSYLANHFN) are Periplasmic-facing. A helical membrane pass occupies residues 298–318 (APVIAWMAPIIAIIAITKSFL). Topologically, residues 319–347 (GHYLGAREGFNGMVIKSLRGKGKSIEINK) are cytoplasmic. Residues 348–368 (LNRITALFMLVTTWIVATLNP) traverse the membrane as a helical segment. Residue S369 is a topological domain, periplasmic. The chain crosses the membrane as a helical span at residues 370-390 (ILGMIETLGGPIIAMILFLMP). At 391 to 406 (MYAIQKVPAMRKYSGH) the chain is on the cytoplasmic side. The helical transmembrane segment at 407-427 (ISNVFVVVMGLIAISAIFYSL) threads the bilayer. Topologically, residues 428-429 (FS) are periplasmic.

It belongs to the amino acid/polyamine transporter 2 family. SdaC/TdcC subfamily.

It is found in the cell inner membrane. The enzyme catalyses L-serine(in) + H(+)(in) = L-serine(out) + H(+)(out). Its function is as follows. Mediates the import of L-serine into the cell. Is energized by proton cotransport. This chain is Serine transporter SdaC (sdaC), found in Escherichia coli O157:H7.